The primary structure comprises 609 residues: UvrABC system protein C (609 aa).

A GIY-YIG domain is found at 15–92; it reads TGSGVYQIQD…IKQFRPRYNV (78 aa). One can recognise a UVR domain in the interval 202-237; the sequence is DQVIIKLTERMEVASENLVFEEAAHYRDQIRQLRRL.

It belongs to the UvrC family. In terms of assembly, interacts with UvrB in an incision complex.

It is found in the cytoplasm. Its function is as follows. The UvrABC repair system catalyzes the recognition and processing of DNA lesions. UvrC both incises the 5' and 3' sides of the lesion. The N-terminal half is responsible for the 3' incision and the C-terminal half is responsible for the 5' incision. This is UvrABC system protein C from Coxiella burnetii (strain Dugway 5J108-111).